A 604-amino-acid polypeptide reads, in one-letter code: MNKTKGFTKYKKMRYMPGLDGLRAIAVLGIIIYHLNKQWLTGGFLGVDTFFVISGYLITSLLLKEYDDTGIIKLKSFWIRRLKRLLPAVIVLLMVVGTATLLLKSDNIIRVKHDIIAAIFYVSNWWYIAKDVNYFEQFSFMPLKHLWSLAIEEQFYIFFPVILVTLLLTIKKRYKIGFIFWGVSIISLGLMMFIYSINGDHSRVYFGTDTRLQTLLLGVILAFLWPPFKLKNDPPKVVKYVIDSIGSLSFIVLILLFFIINDETNWIYDGGFYLISILTLFIIASVVHPSTWIAKIFSNPVLVFIGKRSYSLYLWHFAVISFVHSYYVDGQIPVYVYFIDISLTIIFAELSYRFIETPFRKEGIKALNWRSSYIPQFIRMVIVVTLLIPFMLILVGAFNKYGKDIIGEKANSFDTTIEDNYSMRIAPIDNIHIDGLVSEKKKESSDVYNNIKPLLIGDSVMVDIGESFKSSVPKSRIDGKVGRQLYQTLPLVKANYSQYKKSSDQVVLELGTNGDFTVKQLDDLLNQFGKAKIYLVNTRVPRIYEANVNRLLADAAKRKSNVTLIDWYKRSQGHSEYFAPDGVHLEYKGVLALKDEILKALKKK.

The next 11 membrane-spanning stretches (helical) occupy residues 15–35, 43–63, 85–105, 150–170, 176–196, 212–232, 240–260, 267–287, 310–330, 332–352, and 377–397; these read YMPG…IYHL, GFLG…SLLL, LLPA…LLKS, AIEE…LLTI, IGFI…FIYS, LQTL…KLKN, YVID…FFII, IYDG…ASVV, YSLY…YVDG, IPVY…ELSY, and FIRM…LVGA. Residues serine 459, aspartate 581, and histidine 584 contribute to the active site.

Belongs to the acyltransferase 3 family.

The protein localises to the cell membrane. In Staphylococcus aureus (strain MRSA252), this protein is Putative O-acetyltransferase SAR0937.